The primary structure comprises 384 residues: Putative dioxygenase SSO1533 (384 aa).

Residues H296, E302, and H332 each coordinate Fe cation.

Belongs to the homogentisate dioxygenase family. It depends on Fe cation as a cofactor.

This chain is Putative dioxygenase SSO1533, found in Saccharolobus solfataricus (strain ATCC 35092 / DSM 1617 / JCM 11322 / P2) (Sulfolobus solfataricus).